A 267-amino-acid chain; its full sequence is Protein COFACTOR ASSEMBLY OF COMPLEX C SUBUNIT B CCB1, chloroplastic (267 aa).

Residues 1–44 (MATKLISPPLSCPWVTSREVIIKGLPRRRREWMVTKRNRVSAVT) constitute a chloroplast transit peptide. Over 45 to 84 (AMIVEPLSVVSSSAIQIHQWWEQNPNSLLLMTEATGGYSL) the chain is Lumenal. Residues 85-105 (ASYYTSLGLFVISVPGLWSLI) form a helical membrane-spanning segment. Over 106–164 (KRSVKSKIVRKTFVVNDVKKEPKQVAGEILSFFTRKNFNITDRGETITFEGKMVPSRGQ) the chain is Stromal. The chain crosses the membrane as a helical span at residues 165 to 185 (AALLTFCTCISLASVGLVLTI). Position 186 (Thr-186) is a topological domain, lumenal. Residues 187-207 (VPDFGNNWFFIILLSPLAGVY) traverse the membrane as a helical segment. Residues 208-267 (YWKKASRKEEIKVKMMVGSKGRLDEIVVQGDDVQVEEMRKELQLNEKGMVYVKGLFERSS) lie on the Stromal side of the membrane.

It localises to the plastid. Its subcellular location is the chloroplast thylakoid membrane. Required for the biogenesis and accumulation of native cytochrome b6 in the thylakoid membrane. Controls the conversion of apocytochrome b6 to holocytochrome b6. Required for covalent binding of the c-type heme to cytochrome b6. The protein is Protein COFACTOR ASSEMBLY OF COMPLEX C SUBUNIT B CCB1, chloroplastic of Arabidopsis thaliana (Mouse-ear cress).